Consider the following 1392-residue polypeptide: DNA-directed RNA polymerase subunit beta (1392 aa).

The interval 1372 to 1392 is disordered; that stretch reads LSSYAEEDPDEGPEALPEAAE.

It belongs to the RNA polymerase beta chain family. As to quaternary structure, the RNAP catalytic core consists of 2 alpha, 1 beta, 1 beta' and 1 omega subunit. When a sigma factor is associated with the core the holoenzyme is formed, which can initiate transcription.

It carries out the reaction RNA(n) + a ribonucleoside 5'-triphosphate = RNA(n+1) + diphosphate. In terms of biological role, DNA-dependent RNA polymerase catalyzes the transcription of DNA into RNA using the four ribonucleoside triphosphates as substrates. This is DNA-directed RNA polymerase subunit beta from Sphingopyxis alaskensis (strain DSM 13593 / LMG 18877 / RB2256) (Sphingomonas alaskensis).